Consider the following 224-residue polypeptide: Dimethyl sulfoxide reductase transcriptional activator (224 aa).

The region spanning 158 to 209 (LTDKQREAAAAAVAKGYYATPRGADLSDLATALGISKSAVSQRLSAVESKLA) is the HTH bat-type domain.

Its function is as follows. Involved in activating dmsEABCD gene expression related to dimethyl sulfoxide (DMSO) reductase. Required for anaerobic respiration on dimethyl sulfoxide (DMSO) and trimethylamine N-oxide (TMAO). This is Dimethyl sulfoxide reductase transcriptional activator (dmsR) from Halobacterium salinarum (strain ATCC 700922 / JCM 11081 / NRC-1) (Halobacterium halobium).